The following is a 178-amino-acid chain: Disulfide bond formation protein B (178 aa).

At 1–14 (MLSFFKTLSMGRSG) the chain is on the cytoplasmic side. The chain crosses the membrane as a helical span at residues 15–31 (WLLLAFSALVLELVALY). Residues 32-49 (FQYGMQLQPCVMCVYERV) are Periplasmic-facing. A disulfide bridge links Cys41 with Cys44. Residues 50–65 (ALGGILFAGIIGAIAP) form a helical membrane-spanning segment. Residues 66 to 72 (SSWFFRF) lie on the Cytoplasmic side of the membrane. A helical transmembrane segment spans residues 73–90 (LGIIIGLGASVKGFLLAL). The Periplasmic segment spans residues 91–145 (KHVDYQLNPAPWNQCAYLPEFPQTLPLDQWFPYLFKPIGSCSDIQWSFLGFSMAQ). A disulfide bond links Cys105 and Cys131. Residues 146 to 164 (WILVMFAFYSILLAIILIS) traverse the membrane as a helical segment. Topologically, residues 165-178 (QVKAGKPKHREIFR) are cytoplasmic.

The protein belongs to the DsbB family.

The protein resides in the cell inner membrane. In terms of biological role, required for disulfide bond formation in some periplasmic proteins. Acts by oxidizing the DsbA protein. This is Disulfide bond formation protein B from Mannheimia succiniciproducens (strain KCTC 0769BP / MBEL55E).